The chain runs to 552 residues: Polypeptide N-acetylgalactosaminyltransferase 14 (552 aa).

Residues 1–6 lie on the Cytoplasmic side of the membrane; it reads MRRLTR. Residues 7 to 26 traverse the membrane as a helical; Signal-anchor for type II membrane protein segment; it reads RLVLPVFGVLWITVLLFFWV. At 27–552 the chain is on the lumenal side; the sequence is TKRKLEVPTG…MSQHWDMVSS (526 aa). 5 disulfide bridges follow: C101/C328, C319/C397, C430/C449, C476/C493, and C517/C538. The interval 110 to 215 is catalytic subdomain A; the sequence is LPPTSIIITF…RDWLQPLLHR (106 aa). Positions 151 and 176 each coordinate substrate. Mn(2+) is bound at residue D199. S200 is a substrate binding site. H201 provides a ligand contact to Mn(2+). Positions 274-336 are catalytic subdomain B; that stretch reads PIRTPIIAGG…PCSRVGHVFR (63 aa). W305 is a substrate binding site. Residue H333 coordinates Mn(2+). Residues R336, H339, and Y341 each coordinate substrate. In terms of domain architecture, Ricin B-type lectin spans 415–550; the sequence is KESSIQKGNI…SLMSQHWDMV (136 aa).

The protein belongs to the glycosyltransferase 2 family. GalNAc-T subfamily. Mn(2+) serves as cofactor. As to expression, detected in renal tubules (at protein level). Highly expressed in fetal and adult kidney. Widely expressed at low level. Weakly expressed in whole brain, cerebellum, thymus, lung, mammary gland, liver, stomach, small intestine, colon, pancreas, spleen, bladder, uterus, placenta, testis, ovary, skeletal muscle, leukocyte, B-cell, bone marrow, fetal brain, fetal thymus, fetal lung, fetal liver, fetal small intestine, fetal spleen, fetal skeletal and fetus. Detected in renal tubules (at protein level).

The protein resides in the golgi apparatus membrane. It carries out the reaction L-seryl-[protein] + UDP-N-acetyl-alpha-D-galactosamine = a 3-O-[N-acetyl-alpha-D-galactosaminyl]-L-seryl-[protein] + UDP + H(+). The enzyme catalyses L-threonyl-[protein] + UDP-N-acetyl-alpha-D-galactosamine = a 3-O-[N-acetyl-alpha-D-galactosaminyl]-L-threonyl-[protein] + UDP + H(+). The protein operates within protein modification; protein glycosylation. Its function is as follows. Catalyzes the initial reaction in O-linked oligosaccharide biosynthesis, the transfer of an N-acetyl-D-galactosamine residue to a serine or threonine residue on the protein receptor. Displays activity toward mucin-derived peptide substrates such as Muc2, Muc5AC, Muc7, and Muc13 (-58). May be involved in O-glycosylation in kidney. In Homo sapiens (Human), this protein is Polypeptide N-acetylgalactosaminyltransferase 14 (GALNT14).